The sequence spans 84 residues: DNA-directed RNA polymerase subunit Rpo5 (84 aa).

The protein belongs to the archaeal Rpo5/eukaryotic RPB5 RNA polymerase subunit family. In terms of assembly, part of the 13-subunit RNA polymerase complex.

It is found in the cytoplasm. It carries out the reaction RNA(n) + a ribonucleoside 5'-triphosphate = RNA(n+1) + diphosphate. Its function is as follows. DNA-dependent RNA polymerase (RNAP) catalyzes the transcription of DNA into RNA using the four ribonucleoside triphosphates as substrates. In Saccharolobus solfataricus (strain ATCC 35092 / DSM 1617 / JCM 11322 / P2) (Sulfolobus solfataricus), this protein is DNA-directed RNA polymerase subunit Rpo5.